Consider the following 108-residue polypeptide: Urease subunit gamma (108 aa).

This sequence belongs to the urease gamma subunit family. As to quaternary structure, heterotrimer of UreA (gamma), UreB (beta) and UreC (alpha) subunits. Three heterotrimers associate to form the active enzyme.

It is found in the cytoplasm. It carries out the reaction urea + 2 H2O + H(+) = hydrogencarbonate + 2 NH4(+). The protein operates within nitrogen metabolism; urea degradation; CO(2) and NH(3) from urea (urease route): step 1/1. In Haloquadratum walsbyi (strain DSM 16790 / HBSQ001), this protein is Urease subunit gamma.